We begin with the raw amino-acid sequence, 572 residues long: Proline dehydrogenase 1, mitochondrial (572 aa).

A compositionally biased stretch (low complexity) spans 105-124 (NHSNQTNNVNNKNYNNNNNN). A disordered region spans residues 105–140 (NHSNQTNNVNNKNYNNNNNNFEKDDKFGPPNNQNNN).

Belongs to the proline oxidase family. It depends on FAD as a cofactor.

It is found in the mitochondrion matrix. The enzyme catalyses L-proline + a quinone = (S)-1-pyrroline-5-carboxylate + a quinol + H(+). It functions in the pathway amino-acid degradation; L-proline degradation into L-glutamate; L-glutamate from L-proline: step 1/2. Functionally, converts proline to delta-1-pyrroline-5-carboxylate. This chain is Proline dehydrogenase 1, mitochondrial (prodh), found in Dictyostelium discoideum (Social amoeba).